The chain runs to 189 residues: Nucleoside triphosphate pyrophosphatase (189 aa).

Residue Asp70 is the Proton acceptor of the active site.

The protein belongs to the Maf family. Requires a divalent metal cation as cofactor.

The protein localises to the cytoplasm. The catalysed reaction is a ribonucleoside 5'-triphosphate + H2O = a ribonucleoside 5'-phosphate + diphosphate + H(+). It carries out the reaction a 2'-deoxyribonucleoside 5'-triphosphate + H2O = a 2'-deoxyribonucleoside 5'-phosphate + diphosphate + H(+). Functionally, nucleoside triphosphate pyrophosphatase. May have a dual role in cell division arrest and in preventing the incorporation of modified nucleotides into cellular nucleic acids. The protein is Nucleoside triphosphate pyrophosphatase of Xylella fastidiosa (strain M23).